A 644-amino-acid chain; its full sequence is SURP and G-patch domain-containing protein 1 (644 aa).

Residues 44 to 54 show a composition bias toward basic and acidic residues; that stretch reads REIEARMEQKA. Disordered stretches follow at residues 44-74 and 98-122; these read REIE…ADAQ and AQAS…KRPL. The residue at position 128 (Thr128) is a Phosphothreonine. The SURP motif 1 repeat unit spans residues 188 to 230; sequence VIEKLARFVAEGGPELEKVAMEDYKDNPAFTFLHDKNSREFLY. Phosphoserine is present on Ser253. An SURP motif 2 repeat occupies 263–306; it reads LAEKLARFIADGGPEVETIALQNNRENQAFSFLYDPNSQGYRYY. 2 disordered regions span residues 316 to 342 and 360 to 412; these read AKAG…PEAL and PAVN…PSPL. A Phosphoserine modification is found at Ser323. Residues 360–369 show a composition bias toward pro residues; that stretch reads PAVNPTPSIP. The Nuclear localization signal motif lies at 379-385; the sequence is KRKRKSR. A phosphoserine mark is found at Ser408, Ser410, Ser413, and Ser484. A G-patch domain is found at 561–608; that stretch reads VENIGYQMLMKMGWKEGEGLGTEGQGIKNPVNKGATTIDGAGFGIDRP.

As to quaternary structure, component of the spliceosome.

It localises to the nucleus. Plays a role in pre-mRNA splicing. The sequence is that of SURP and G-patch domain-containing protein 1 (Sugp1) from Rattus norvegicus (Rat).